Consider the following 332-residue polypeptide: MSKNERRTFLLDFEKPLWELEARIEQIRHLAEENNVDVSEQIAQLESRAQNLRQEIFSSLTPSQRLQLARHPRRPSTLDYIQSIADEWFELHGDRGGYDDPALVGGVARLGGRPVVILGHQKGRDTKDNVARNFGMPAPGGYRKAIRLMEHANQFSMPILTFIDTPGAWAGVDAEKLGQGEAIAFNLRQMFSFDVPIICTVIGEGGSGGALGIGVGDKLMMLEHAVYTVATPEACAAILWKDAKKSSQAAVALKITAKDLKELGIIDTIIPEPSGAAHVNPLEAAAILKETLVNNLEELSNLTPEERKTLRYEKFRQIGVFLESDSNLALHS.

Positions 44–298 (QLESRAQNLR…KETLVNNLEE (255 aa)) constitute a CoA carboxyltransferase C-terminal domain.

It belongs to the AccA family. As to quaternary structure, acetyl-CoA carboxylase is a heterohexamer composed of biotin carboxyl carrier protein (AccB), biotin carboxylase (AccC) and two subunits each of ACCase subunit alpha (AccA) and ACCase subunit beta (AccD).

The protein localises to the cytoplasm. It catalyses the reaction N(6)-carboxybiotinyl-L-lysyl-[protein] + acetyl-CoA = N(6)-biotinyl-L-lysyl-[protein] + malonyl-CoA. It functions in the pathway lipid metabolism; malonyl-CoA biosynthesis; malonyl-CoA from acetyl-CoA: step 1/1. Component of the acetyl coenzyme A carboxylase (ACC) complex. First, biotin carboxylase catalyzes the carboxylation of biotin on its carrier protein (BCCP) and then the CO(2) group is transferred by the carboxyltransferase to acetyl-CoA to form malonyl-CoA. The polypeptide is Acetyl-coenzyme A carboxylase carboxyl transferase subunit alpha (Crocosphaera subtropica (strain ATCC 51142 / BH68) (Cyanothece sp. (strain ATCC 51142))).